A 266-amino-acid polypeptide reads, in one-letter code: Vitamin B12-binding protein (266 aa).

A signal peptide spans 1–22; the sequence is MAKSLFRALVALSFLAPLWLNA. A Fe/B12 periplasmic-binding domain is found at 25-266; the sequence is RVITLSPANT…QLCNALSQVD (242 aa). Cyanocob(III)alamin is bound by residues Y50 and 242 to 246; that span reads DWFER. The cysteines at positions 183 and 259 are disulfide-linked.

This sequence belongs to the BtuF family. The complex is composed of two ATP-binding proteins (BtuD), two transmembrane proteins (BtuC) and a solute-binding protein (BtuF).

Its subcellular location is the periplasm. Functionally, part of the ABC transporter complex BtuCDF involved in vitamin B12 import. Binds vitamin B12 and delivers it to the periplasmic surface of BtuC. The chain is Vitamin B12-binding protein from Escherichia coli O6:H1 (strain CFT073 / ATCC 700928 / UPEC).